The following is a 487-amino-acid chain: Citrate/succinate antiporter (487 aa).

Helical transmembrane passes span 11–31 (LLAP…DGMP), 60–80 (FIAV…AKEL), 95–115 (GLAG…IFAL), 138–158 (TLTL…FTPS), 190–210 (IGGY…SMFV), 214–234 (APNV…ISWL), 237–257 (FLCF…LSYV), 288–308 (WTLI…SEVI), 309–329 (NATA…VVPW), 345–365 (LATL…DWFA), 379–399 (ATVI…ASLS), 401–421 (HTAT…GVPM), 424–444 (LCIL…YATG), and 463–483 (LGAI…WPIL).

The protein belongs to the SLC13A/DASS transporter (TC 2.A.47) family. DIT1 subfamily.

The protein localises to the cell inner membrane. In terms of biological role, responsible for the uptake of citrate in exchange to the efflux of succinate. Has a relatively broad specificity for C(4)-dicarboxylates and tricarboxylates. This Escherichia coli O157:H7 protein is Citrate/succinate antiporter (citT).